A 425-amino-acid chain; its full sequence is tRNA (guanine-N(7)-)-methyltransferase non-catalytic subunit wuho (425 aa).

A disordered region spans residues alanine 67–valine 102. Low complexity predominate over residues glycine 88–valine 102. WD repeat units follow at residues valine 97–leucine 138, proline 142–arginine 181, glycine 185–serine 224, glycine 228–glutamine 266, and alanine 325–serine 365.

The protein belongs to the WD repeat TRM82 family. Forms a heterodimer with the catalytic subunit Mettl1. Interacts with mei-P26 and weakly interacts with bgcn; required for the function or formation of the mei-P26-bgcn-bam-sxl complex. Interacts with nanos; may be involved in mei-P26-dependent derepression of the BMP signaling pathway. Interacts with Myc; the interaction may be mediated by mei-P26 and may be involved in the regulation of ribosome biogenesis. In terms of tissue distribution, in testis, it is present at high level in hub cells, a niche for germline stem cells of testis. Ubiquitously expressed in all testicular cells throughout spermatogenesis. Ubiquitously expressed in all germline and somatic cells of the ovary.

Its subcellular location is the nucleus. The protein localises to the cytoplasm. It participates in tRNA modification; N(7)-methylguanine-tRNA biosynthesis. In terms of biological role, required for the Mettl1-dependent formation of N(7)-methylguanine at position 46 (m7G46) in tRNA. In the Mettl1-wuho methyltransferase complex, it is required to stabilize and induce conformational changes of the catalytic subunit. Required for binding of nanos mRNA and repression of translation by the mei-P26-bgcn-bam-sxl complex. May cooperate with mei-P26 and nanos to derepress the BMP signaling pathway. May cooperate with mei-P26 to suppress expression of a subset of microRNAs. May cooperate with mei-P26 to regulate bam expression levels in germline cells during gametogenesis. Required to promote mitosis to meiosis transition during gametogenesis. May regulate germline cell division in part by regulating ribosome biogenesis. The chain is tRNA (guanine-N(7)-)-methyltransferase non-catalytic subunit wuho from Drosophila yakuba (Fruit fly).